The sequence spans 125 residues: RutC family protein STK_08110 (125 aa).

This sequence belongs to the RutC family.

The sequence is that of RutC family protein STK_08110 from Sulfurisphaera tokodaii (strain DSM 16993 / JCM 10545 / NBRC 100140 / 7) (Sulfolobus tokodaii).